The primary structure comprises 471 residues: ATP synthase subunit beta (471 aa).

152–159 is a binding site for ATP; it reads GGAGVGKT.

Belongs to the ATPase alpha/beta chains family. As to quaternary structure, F-type ATPases have 2 components, CF(1) - the catalytic core - and CF(0) - the membrane proton channel. CF(1) has five subunits: alpha(3), beta(3), gamma(1), delta(1), epsilon(1). CF(0) has three main subunits: a(1), b(2) and c(9-12). The alpha and beta chains form an alternating ring which encloses part of the gamma chain. CF(1) is attached to CF(0) by a central stalk formed by the gamma and epsilon chains, while a peripheral stalk is formed by the delta and b chains.

It is found in the cell membrane. The catalysed reaction is ATP + H2O + 4 H(+)(in) = ADP + phosphate + 5 H(+)(out). Functionally, produces ATP from ADP in the presence of a proton gradient across the membrane. The catalytic sites are hosted primarily by the beta subunits. This chain is ATP synthase subunit beta, found in Herpetosiphon aurantiacus (Herpetosiphon giganteus).